We begin with the raw amino-acid sequence, 322 residues long: Mitochondrial uncoupling protein 4 (322 aa).

Solcar repeat units follow at residues 20 to 114, 124 to 216, and 225 to 316; these read SKFL…LREV, YPLW…VKHY, and DNIS…IREM. Helical transmembrane passes span 22–39, 87–108, 126–143, 194–211, 228–247, and 287–310; these read FLLSGCAATVAELATFPL, WQGVTPAIYRHVVYSGGRMVTY, LWKSVIGGMMAGVIGQFL, PNIQRAALVNMGDLTTYD, STHGLSSLCSGLVASILGTP, and SLYKGFLPSWLRMTPWSMVFWLTY.

This sequence belongs to the mitochondrial carrier (TC 2.A.29) family. As to quaternary structure, homotetramer.

It is found in the mitochondrion inner membrane. Its subcellular location is the cell projection. The protein localises to the neuron projection. It catalyses the reaction H(+)(in) = H(+)(out). It carries out the reaction chloride(in) = chloride(out). Facilitates proton transport across the inner mitochondrial membrane and may dissipate excessive proton gradient associated with oxidative and metabolic stress at neuronal synapses. Regulates glutamate-induced proton conductance in astrocytes, shifting the energy metabolism toward aerobic glycolysis and lactate transfer to neurons for ATP synthesis. Can transport chloride ions with lower efficiency. The transport mechanism remains to be elucidated. The protein is Mitochondrial uncoupling protein 4 of Mus musculus (Mouse).